The primary structure comprises 89 residues: Small ribosomal subunit protein bS20 (89 aa).

The disordered stretch occupies residues 1–28 (MTLANIKSAKKRAIQSEKRRQHNASQRS).

This sequence belongs to the bacterial ribosomal protein bS20 family.

Its function is as follows. Binds directly to 16S ribosomal RNA. The protein is Small ribosomal subunit protein bS20 of Pasteurella multocida (strain Pm70).